The following is a 330-amino-acid chain: MKTAYITRQRQISFVKAHFSRLLEEKLGLLEVQAPILSRVGDGTQDNLSGCEKAVQVNVKTLPQAQFEVVHSLAKWKRKTLGQHDFSAGEGLYTHMKALRPDEDRLSPVHSVYVDQWDWERVMGDGERHLGTLKQTVESIWSAIKETELAAAERSGLTPFLPDAIHFVHSETLQRRFPELDAKGRERAIAKELGAVFLIGIGGKLADGKRHDVRAPDYDDWTTPTESGFAGLNGDILVWNPLLEDAFEISSMGIRVDADTLKRQLALTGDQDRLALEWHQALLNGEMPQTIGGGIGQSRLTMLLLQLPHIGQVQCGVWPEQVQSTVAELL.

The protein belongs to the class-II aminoacyl-tRNA synthetase family. AsnA subfamily.

The protein localises to the cytoplasm. The enzyme catalyses L-aspartate + NH4(+) + ATP = L-asparagine + AMP + diphosphate + H(+). The protein operates within amino-acid biosynthesis; L-asparagine biosynthesis; L-asparagine from L-aspartate (ammonia route): step 1/1. The polypeptide is Aspartate--ammonia ligase (Cronobacter sakazakii (strain ATCC BAA-894) (Enterobacter sakazakii)).